Reading from the N-terminus, the 315-residue chain is Malate dehydrogenase (315 aa).

9–15 (GGSGNVG) lines the NAD(+) pocket. Residues arginine 84 and arginine 90 each coordinate substrate. Residues asparagine 97 and 120–122 (VSN) contribute to the NAD(+) site. 2 residues coordinate substrate: asparagine 122 and arginine 153. Histidine 177 (proton acceptor) is an active-site residue.

It belongs to the LDH/MDH superfamily.

It catalyses the reaction (S)-malate + NAD(+) = oxaloacetate + NADH + H(+). In terms of biological role, catalyzes the reversible oxidation of malate to oxaloacetate. The chain is Malate dehydrogenase from Helicobacter hepaticus (strain ATCC 51449 / 3B1).